Consider the following 836-residue polypeptide: Envelope glycoprotein gp160 (836 aa).

The first 21 residues, 1–21 (MGMQSGWPFFCLLISLTIGSD), serve as a signal peptide directing secretion. The Extracellular segment spans residues 22–656 (PHWVTVYYGV…ITKWLWYIKI (635 aa)). A disulfide bridge connects residues cysteine 43 and cysteine 63. Asparagine 77, asparagine 121, asparagine 130, asparagine 134, asparagine 146, asparagine 150, asparagine 180, asparagine 189, asparagine 224, asparagine 228, asparagine 233, asparagine 254, asparagine 276, asparagine 282, asparagine 288, asparagine 318, asparagine 328, asparagine 340, and asparagine 341 each carry an N-linked (GlcNAc...) asparagine; by host glycan. Cystine bridges form between cysteine 108-cysteine 197, cysteine 115-cysteine 188, cysteine 120-cysteine 147, cysteine 210-cysteine 239, and cysteine 220-cysteine 231. The V1 stretch occupies residues 120–146 (CNNSNGNSAGNSTTNRTEDLEDRQMKN). The segment at 147–188 (CSFNITTEIRDRKKQVYSLFYVEDVVPIKDGTDNNTYRLINC) is V2. Residues 283-316 (CTRPGNNTGGQVQIGPAMTFYNIEKIVGDVRQAY) are V3. Cysteines 283 and 317 form a disulfide. The tract at residues 349–359 (KNGGDLEVTHL) is CD4-binding loop. 2 disulfides stabilise this stretch: cysteine 363–cysteine 418 and cysteine 370–cysteine 391. Residues 370 to 391 (CNTSRLFNESENKTNKTIILPC) are V4. Residues asparagine 371, asparagine 377, asparagine 381, asparagine 384, asparagine 415, and asparagine 435 are each glycosylated (N-linked (GlcNAc...) asparagine; by host). Positions 434–441 (GNKTVYPS) are V5. The tract at residues 482-503 (AAFGLGALFLGFLGAAGSTMGA) is fusion peptide. Positions 545–563 (KQLRAKVLAIERYLRDQQI) are immunosuppression. Cysteine 569 and cysteine 575 are oxidised to a cystine. Residues asparagine 582, asparagine 588, asparagine 597, and asparagine 609 are each glycosylated (N-linked (GlcNAc...) asparagine; by host). Residues 605-639 (RKVRNYSGVIFDLIEQAQEQQNTNEKALLELDQWA) adopt a coiled-coil conformation. The tract at residues 634–655 (ELDQWASLWNWFDITKWLWYIK) is MPER; binding to GalCer. The chain crosses the membrane as a helical span at residues 657–677 (AIMVVAGIIGIRIISAIITII). Residues 678–836 (ARVRQGYSPL…IRQGLERALL (159 aa)) lie on the Cytoplasmic side of the membrane. The YXXL motif; contains endocytosis signal motif lies at 684–687 (YSPL). The segment at 696–715 (AARGPDRPEETEEGVGGQDR) is disordered. A Di-leucine internalization motif motif is present at residues 835–836 (LL).

This sequence belongs to the HIV-1 env protein family. In terms of assembly, the mature envelope protein (Env) consists of a homotrimer of non-covalently associated gp120-gp41 heterodimers. The resulting complex protrudes from the virus surface as a spike. There seems to be as few as 10 spikes on the average virion. Interacts with host CD4, CCR5 and CXCR4. Gp120 also interacts with the C-type lectins CD209/DC-SIGN and CLEC4M/DC-SIGNR (collectively referred to as DC-SIGN(R)). Gp120 and gp41 interact with GalCer. Gp120 interacts with host ITGA4/ITGB7 complex; on CD4+ T-cells, this interaction results in rapid activation of integrin ITGAL/LFA-1, which facilitates efficient cell-to-cell spreading of HIV-1. Gp120 interacts with cell-associated heparan sulfate; this interaction increases virus infectivity on permissive cells and may be involved in infection of CD4- cells. As to quaternary structure, the mature envelope protein (Env) consists of a homotrimer of non-covalently associated gp120-gp41 heterodimers. The resulting complex protrudes from the virus surface as a spike. There seems to be as few as 10 spikes on the average virion. In terms of processing, highly glycosylated by host. The high number of glycan on the protein is reffered to as 'glycan shield' because it contributes to hide protein sequence from adaptive immune system. Palmitoylation of the transmembrane protein and of Env polyprotein (prior to its proteolytic cleavage) is essential for their association with host cell membrane lipid rafts. Palmitoylation is therefore required for envelope trafficking to classical lipid rafts, but not for viral replication. Post-translationally, specific enzymatic cleavages in vivo yield mature proteins. Envelope glycoproteins are synthesized as an inactive precursor that is heavily N-glycosylated and processed likely by host cell furin in the Golgi to yield the mature SU and TM proteins. The cleavage site between SU and TM requires the minimal sequence [KR]-X-[KR]-R. About 2 of the 9 disulfide bonds of gp41 are reduced by P4HB/PDI, following binding to CD4 receptor.

The protein resides in the virion membrane. The protein localises to the host cell membrane. It localises to the host endosome membrane. Functionally, oligomerizes in the host endoplasmic reticulum into predominantly trimers. In a second time, gp160 transits in the host Golgi, where glycosylation is completed. The precursor is then proteolytically cleaved in the trans-Golgi and thereby activated by cellular furin or furin-like proteases to produce gp120 and gp41. In terms of biological role, attaches the virus to the host lymphoid cell by binding to the primary receptor CD4. This interaction induces a structural rearrangement creating a high affinity binding site for a chemokine coreceptor like CXCR4 and/or CCR5. Acts as a ligand for CD209/DC-SIGN and CLEC4M/DC-SIGNR, which are respectively found on dendritic cells (DCs), and on endothelial cells of liver sinusoids and lymph node sinuses. These interactions allow capture of viral particles at mucosal surfaces by these cells and subsequent transmission to permissive cells. HIV subverts the migration properties of dendritic cells to gain access to CD4+ T-cells in lymph nodes. Virus transmission to permissive T-cells occurs either in trans (without DCs infection, through viral capture and transmission), or in cis (following DCs productive infection, through the usual CD4-gp120 interaction), thereby inducing a robust infection. In trans infection, bound virions remain infectious over days and it is proposed that they are not degraded, but protected in non-lysosomal acidic organelles within the DCs close to the cell membrane thus contributing to the viral infectious potential during DCs' migration from the periphery to the lymphoid tissues. On arrival at lymphoid tissues, intact virions recycle back to DCs' cell surface allowing virus transmission to CD4+ T-cells. Acts as a class I viral fusion protein. Under the current model, the protein has at least 3 conformational states: pre-fusion native state, pre-hairpin intermediate state, and post-fusion hairpin state. During fusion of viral and target intracellular membranes, the coiled coil regions (heptad repeats) assume a trimer-of-hairpins structure, positioning the fusion peptide in close proximity to the C-terminal region of the ectodomain. The formation of this structure appears to drive apposition and subsequent fusion of viral and target cell membranes. Complete fusion occurs in host cell endosomes and is dynamin-dependent, however some lipid transfer might occur at the plasma membrane. The virus undergoes clathrin-dependent internalization long before endosomal fusion, thus minimizing the surface exposure of conserved viral epitopes during fusion and reducing the efficacy of inhibitors targeting these epitopes. Membranes fusion leads to delivery of the nucleocapsid into the cytoplasm. The protein is Envelope glycoprotein gp160 of Human immunodeficiency virus type 1 group N (isolate YBF106) (HIV-1).